Consider the following 26-residue polypeptide: MPEQKANCSPNGNITVDSMIMSLGSS.

A compositionally biased stretch (polar residues) spans methionine 1–valine 16. A disordered region spans residues methionine 1–serine 26.

This is an uncharacterized protein from Saccharomyces cerevisiae (strain ATCC 204508 / S288c) (Baker's yeast).